The sequence spans 347 residues: NADH-ubiquinone oxidoreductase chain 2 (347 aa).

Helical transmembrane passes span 3 to 23 (PPIL…VLTS), 25 to 45 (HWLT…PILM), 59 to 79 (YLLT…IDLL), 96 to 116 (AMMT…FWVP), 122 to 142 (IHMS…LSIL), 149 to 169 (INPN…GWGG), 178 to 198 (ILAY…LYNP), 200 to 220 (MMIL…MLFM), 237 to 257 (APLI…LPPL), 274 to 294 (EMII…YFYM), and 325 to 345 (LLSP…LLSI).

Belongs to the complex I subunit 2 family. Core subunit of respiratory chain NADH dehydrogenase (Complex I) which is composed of 45 different subunits. Interacts with TMEM242.

It localises to the mitochondrion inner membrane. The catalysed reaction is a ubiquinone + NADH + 5 H(+)(in) = a ubiquinol + NAD(+) + 4 H(+)(out). Functionally, core subunit of the mitochondrial membrane respiratory chain NADH dehydrogenase (Complex I) which catalyzes electron transfer from NADH through the respiratory chain, using ubiquinone as an electron acceptor. Essential for the catalytic activity and assembly of complex I. In Cynictis penicillata (Yellow mongoose), this protein is NADH-ubiquinone oxidoreductase chain 2.